Consider the following 155-residue polypeptide: Crossover junction endodeoxyribonuclease RuvC (155 aa).

Active-site residues include Asp7, Glu68, and Asp140. Mg(2+) is bound by residues Asp7, Glu68, and Asp140.

The protein belongs to the RuvC family. As to quaternary structure, homodimer which binds Holliday junction (HJ) DNA. The HJ becomes 2-fold symmetrical on binding to RuvC with unstacked arms; it has a different conformation from HJ DNA in complex with RuvA. In the full resolvosome a probable DNA-RuvA(4)-RuvB(12)-RuvC(2) complex forms which resolves the HJ. It depends on Mg(2+) as a cofactor.

The protein localises to the cytoplasm. The catalysed reaction is Endonucleolytic cleavage at a junction such as a reciprocal single-stranded crossover between two homologous DNA duplexes (Holliday junction).. Its function is as follows. The RuvA-RuvB-RuvC complex processes Holliday junction (HJ) DNA during genetic recombination and DNA repair. Endonuclease that resolves HJ intermediates. Cleaves cruciform DNA by making single-stranded nicks across the HJ at symmetrical positions within the homologous arms, yielding a 5'-phosphate and a 3'-hydroxyl group; requires a central core of homology in the junction. The consensus cleavage sequence is 5'-(A/T)TT(C/G)-3'. Cleavage occurs on the 3'-side of the TT dinucleotide at the point of strand exchange. HJ branch migration catalyzed by RuvA-RuvB allows RuvC to scan DNA until it finds its consensus sequence, where it cleaves and resolves the cruciform DNA. The chain is Crossover junction endodeoxyribonuclease RuvC from Prochlorococcus marinus (strain SARG / CCMP1375 / SS120).